A 443-amino-acid polypeptide reads, in one-letter code: Cobyrinate a,c-diamide synthase (443 aa).

The region spanning 244 to 435 (KVSVAMDSAF…AHIHFLSNPR (192 aa)) is the GATase cobBQ-type domain. Cys-327 (nucleophile) is an active-site residue.

It belongs to the CobB/CbiA family. Mg(2+) is required as a cofactor.

The catalysed reaction is cob(II)yrinate + 2 L-glutamine + 2 ATP + 2 H2O = cob(II)yrinate a,c diamide + 2 L-glutamate + 2 ADP + 2 phosphate + 2 H(+). It participates in cofactor biosynthesis; adenosylcobalamin biosynthesis; cob(II)yrinate a,c-diamide from sirohydrochlorin (anaerobic route): step 10/10. Its function is as follows. Catalyzes the ATP-dependent amidation of the two carboxylate groups at positions a and c of cobyrinate, using either L-glutamine or ammonia as the nitrogen source. This Thermoplasma acidophilum (strain ATCC 25905 / DSM 1728 / JCM 9062 / NBRC 15155 / AMRC-C165) protein is Cobyrinate a,c-diamide synthase.